The primary structure comprises 875 residues: cGMP-specific 3',5'-cyclic phosphodiesterase (875 aa).

Disordered stretches follow at residues 1-29 (MERAGPSFGQQRQQQQPQQQKQQQRDQDS) and 78-102 (SCSCPLQQSPRADNSAPGTPTRKIS). The segment covering 10-22 (QQRQQQQPQQQKQ) has biased composition (low complexity). Residues 78-101 (SCSCPLQQSPRADNSAPGTPTRKI) are compositionally biased toward polar residues. Ser-102 carries the phosphoserine modification. GAF domains lie at 164-314 (DVTA…GIVL) and 346-503 (SLEV…GLGI). In terms of domain architecture, PDEase spans 536–860 (ETRELQSLAA…QKWQALAEQQ (325 aa)). The Proton donor role is filled by His-613. Zn(2+)-binding residues include His-617, His-653, Asp-654, and Asp-764. Residue Asp-654 coordinates Mg(2+). Gln-817 provides a ligand contact to 3',5'-cyclic GMP.

It belongs to the cyclic nucleotide phosphodiesterase family. The cofactor is Zn(2+). Mg(2+) serves as cofactor. Phosphorylation is regulated by binding of cGMP to the two allosteric sites. Phosphorylation by PRKG1 leads to its activation. In terms of tissue distribution, expressed in aortic smooth muscle cells, heart, placenta, skeletal muscle and pancreas and, to a much lesser extent, in brain, liver and lung.

It catalyses the reaction 3',5'-cyclic GMP + H2O = GMP + H(+). It participates in purine metabolism; 3',5'-cyclic GMP degradation; GMP from 3',5'-cyclic GMP: step 1/1. Its activity is regulated as follows. Sildenafil (Viagra) is a highly selective and potent inhibitor of PDE5A and is effective in the treatment of penile erectile dysfunction. Also inhibited by zaprinast. Functionally, plays a role in signal transduction by regulating the intracellular concentration of cyclic nucleotides. This phosphodiesterase catalyzes the specific hydrolysis of cGMP to 5'-GMP. Specifically regulates nitric-oxide-generated cGMP. This chain is cGMP-specific 3',5'-cyclic phosphodiesterase, found in Homo sapiens (Human).